The sequence spans 273 residues: Cell division protein FtsQ (273 aa).

At 1–10 (MWNDARTINL) the chain is on the cytoplasmic side. Residues 11–31 (IANTLAVLAVAAMLLAGVAWV) form a helical membrane-spanning segment. Residues 32–273 (AQRPYFTLAA…HSKSKPAKKR (242 aa)) are Periplasmic-facing. The POTRA domain occupies 37–110 (FTLAAIEIES…NTLRVRVEEQ (74 aa)).

Belongs to the FtsQ/DivIB family. FtsQ subfamily. In terms of assembly, part of a complex composed of FtsB, FtsL and FtsQ.

It is found in the cell inner membrane. In terms of biological role, essential cell division protein. May link together the upstream cell division proteins, which are predominantly cytoplasmic, with the downstream cell division proteins, which are predominantly periplasmic. May control correct divisome assembly. The protein is Cell division protein FtsQ of Bordetella pertussis (strain Tohama I / ATCC BAA-589 / NCTC 13251).